A 1465-amino-acid polypeptide reads, in one-letter code: DNA polymerase III PolC-type (1465 aa).

The 157-residue stretch at 427-583 folds into the Exonuclease domain; sequence YVVFDVETTG…YDAEATGRLL (157 aa).

The protein belongs to the DNA polymerase type-C family. PolC subfamily.

Its subcellular location is the cytoplasm. The enzyme catalyses DNA(n) + a 2'-deoxyribonucleoside 5'-triphosphate = DNA(n+1) + diphosphate. Its function is as follows. Required for replicative DNA synthesis. This DNA polymerase also exhibits 3' to 5' exonuclease activity. The polypeptide is DNA polymerase III PolC-type (Streptococcus pyogenes serotype M18 (strain MGAS8232)).